The primary structure comprises 143 residues: Flagellar assembly factor FliW (143 aa).

The protein belongs to the FliW family. In terms of assembly, interacts with flagellin in a 1:1 complex. Two molecules interact with each CsrA dimer; cannot interact with both flagellin and CsrA simultaneously. Has a higher affinity for CsrA than for flagellin. Interacts directly with flagellin (hag), forms a 3-way complex of Hag, FliS and FliW in which Flis and FliW do not directly interact. Interaction with Hag may occur via the C-terminus of Hag.

The protein resides in the cytoplasm. Functionally, acts as an anti-CsrA protein, binds CsrA and prevents it from repressing translation of its target genes, one of which is flagellin. Binds to flagellin (hag), which is implicated in polymerization, and participates in the assembly of the flagellum. An antagonist to translational regulator CsrA, it binds CsrA at an allosteric site and non-competitively inhibits CsrA binding to hag RNA. Partner switching by flagellin between FliW and CsrA provides a flagellar assembly checkpoint to tightly control the timing of flagellin synthesis. Flagellin binds to assembly factor FliW, freeing translation regulator CsrA to repress translation of the flagellin mRNA. When the flagellar hook is assembled flagellin is secreted, depleting intracellular flagellin, which frees FliW to interact with CsrA and inhibits CsrA binding to mRNA. This derepresses flagellin translation and provides protein for flagellar assembly. Once the flagellar filament is completed cytoplasmic flagellin levels rise and CsrA translation repression of flagellin reinitiates. Binds to CsrA and displaces it from hag mRNA. Binds to hag mRNA itself, but only at much higher concentrations than those required to displace CsrA. This chain is Flagellar assembly factor FliW, found in Bacillus subtilis (strain 168).